Consider the following 1241-residue polypeptide: Intraflagellar transport protein 122 homolog (1241 aa).

WD repeat units lie at residues 10 to 50, 51 to 91, 93 to 129, and 131 to 169; these read KAEH…QPLK, GHKD…LKYT, NDAI…VSKH, and SSSK…KVKI. The interval 222-246 is disordered; sequence VYSSQGSEAEEEEPEEEDDSPRDDN. The span at 229–242 shows a compositional bias: acidic residues; it reads EAEEEEPEEEDDSP. 3 WD repeats span residues 278–317, 319–359, and 512–551; these read ALNF…LGTV, EQNS…HGLY, and KQAT…LLFQ.

As to quaternary structure, component of the IFT complex A (IFT-A) complex. IFT-A complex is divided into a core subcomplex composed of IFT122:IFT140:WDR19 which is associated with TULP3 and a peripheral subcomplex composed of IFT43:WDR35:TTC21B. Interacts with IFT43:WDR35; the interaction connects the 2 IFT-A subcomplexes. Interacts with IFTAP; the interaction associates IFTAP with IFT-A complex. As to expression, expressed in many tissues. Predominant expression in testis and pituitary.

The protein localises to the cell projection. It is found in the cilium. The protein resides in the cytoplasm. It localises to the cytoskeleton. Its subcellular location is the cilium basal body. In terms of biological role, as a component of the IFT complex A (IFT-A), a complex required for retrograde ciliary transport and entry into cilia of G protein-coupled receptors (GPCRs), it is required in ciliogenesis and ciliary protein trafficking. Involved in cilia formation during neuronal patterning. Acts as a negative regulator of Shh signaling. Required to recruit TULP3 to primary cilia. In Homo sapiens (Human), this protein is Intraflagellar transport protein 122 homolog.